The primary structure comprises 371 residues: Ribosomal RNA small subunit methyltransferase H (371 aa).

S-adenosyl-L-methionine-binding positions include G92–H94, D111, Y138, D159, and Q166.

It belongs to the methyltransferase superfamily. RsmH family.

It localises to the cytoplasm. The catalysed reaction is cytidine(1402) in 16S rRNA + S-adenosyl-L-methionine = N(4)-methylcytidine(1402) in 16S rRNA + S-adenosyl-L-homocysteine + H(+). Functionally, specifically methylates the N4 position of cytidine in position 1402 (C1402) of 16S rRNA. In Mycolicibacterium gilvum (strain PYR-GCK) (Mycobacterium gilvum (strain PYR-GCK)), this protein is Ribosomal RNA small subunit methyltransferase H.